The sequence spans 491 residues: ATP synthase subunit beta, chloroplastic (491 aa).

ATP is bound at residue 172–179 (GGAGVGKT).

Belongs to the ATPase alpha/beta chains family. F-type ATPases have 2 components, CF(1) - the catalytic core - and CF(0) - the membrane proton channel. CF(1) has five subunits: alpha(3), beta(3), gamma(1), delta(1), epsilon(1). CF(0) has four main subunits: a(1), b(1), b'(1) and c(9-12).

The protein resides in the plastid. It localises to the chloroplast thylakoid membrane. It catalyses the reaction ATP + H2O + 4 H(+)(in) = ADP + phosphate + 5 H(+)(out). Produces ATP from ADP in the presence of a proton gradient across the membrane. The catalytic sites are hosted primarily by the beta subunits. This Pisum sativum (Garden pea) protein is ATP synthase subunit beta, chloroplastic.